A 352-amino-acid chain; its full sequence is MSGTDKVRVNVSQTAQTPLHTSAKLPKVGVLLVNLGTPDGTSYGPMRRYLAEFLSDRRVIEWSRLIWYPILYGIVLNTRPRRSGRLYDRIWNHENNESPLRTYTRAQGEKLAKALSDQPNVVVDLAMRYGQPSIESITDRLLQQGCERIVIFPLYPQYSATTTATVNDKFFEALMKKRFMPAIRTVPSYEAEPVYIDALARSVEKHLATLSFKPEVILTSYHGIPKSYSDKGDPYRQQCLETTRLLRERLGLGEDEMRATFQSRFGPEEWLQPYTDETVKELAKNGVKSVAVLNPGFVADCLETVDEIGNEAAEEFLENGGENFSHIPCLNDSEEGMKVIETLVRRELLGWV.

The Fe cation site is built by His-222 and Glu-303.

The protein belongs to the ferrochelatase family.

The protein resides in the cytoplasm. It catalyses the reaction heme b + 2 H(+) = protoporphyrin IX + Fe(2+). It participates in porphyrin-containing compound metabolism; protoheme biosynthesis; protoheme from protoporphyrin-IX: step 1/1. In terms of biological role, catalyzes the ferrous insertion into protoporphyrin IX. The polypeptide is Ferrochelatase (Brucella canis (strain ATCC 23365 / NCTC 10854 / RM-666)).